The primary structure comprises 152 residues: Probable flagellum biosynthesis repressor protein FlbT (152 aa).

This sequence belongs to the FlbT family.

Its function is as follows. Has a post-transcriptional repressor function in flagellum biogenesis. Associates with the 5'-UTR of fljK mRNA and promotes its degradation. The protein is Probable flagellum biosynthesis repressor protein FlbT of Brucella canis (strain ATCC 23365 / NCTC 10854 / RM-666).